The sequence spans 58 residues: Large ribosomal subunit protein bL32 (58 aa).

Belongs to the bacterial ribosomal protein bL32 family.

This is Large ribosomal subunit protein bL32 from Limosilactobacillus fermentum (strain NBRC 3956 / LMG 18251) (Lactobacillus fermentum).